A 160-amino-acid polypeptide reads, in one-letter code: MGVTKKPDLTDPVLRAKLAKGMGHNYYGEPAWPNDLLYIFPVVILGTIACNVGLAVLEPSMIGEPADPFATPLEILPEWYFFPVFQILRTVPNKLLGVLLMVSVPAGLLTVPFLENVNKFQNPFRRPVATTVFLIGTVVALWLGIGATLPIEKSLTLGLF.

The next 3 helical transmembrane spans lie at 36–56 (LLYIFPVVILGTIACNVGLAV), 95–115 (LLGVLLMVSVPAGLLTVPFLE), and 131–151 (TVFLIGTVVALWLGIGATLPI).

It belongs to the cytochrome b family. PetD subfamily. The 4 large subunits of the cytochrome b6-f complex are cytochrome b6, subunit IV (17 kDa polypeptide, petD), cytochrome f and the Rieske protein, while the 4 small subunits are petG, petL, petM and petN. The complex functions as a dimer.

The protein localises to the plastid. It is found in the chloroplast thylakoid membrane. Component of the cytochrome b6-f complex, which mediates electron transfer between photosystem II (PSII) and photosystem I (PSI), cyclic electron flow around PSI, and state transitions. The chain is Cytochrome b6-f complex subunit 4 from Pisum sativum (Garden pea).